Here is a 130-residue protein sequence, read N- to C-terminus: UPF0713 protein YngL (130 aa).

3 helical membrane-spanning segments follow: residues 4–25 (LSFL…LIVF), 62–84 (MLNC…YLFL), and 89–111 (IPLI…VGVG).

This sequence belongs to the UPF0713 family.

It localises to the cell membrane. The polypeptide is UPF0713 protein YngL (yngL) (Bacillus subtilis (strain 168)).